Consider the following 304-residue polypeptide: Zinc carboxypeptidase (304 aa).

Residues 1-294 (QYHTLPEIYS…DSVVTILKES (294 aa)) form the Peptidase M14 domain. 2 residues coordinate Zn(2+): His-58 and Glu-61. Cys-125 and Cys-148 are oxidised to a cystine. His-184 lines the Zn(2+) pocket. Glu-259 serves as the catalytic Proton donor/acceptor.

This sequence belongs to the peptidase M14 family. Zn(2+) serves as cofactor. Gut specific.

The protein resides in the secreted. Functionally, involved in the digestion of the blood meal. The chain is Zinc carboxypeptidase from Simulium vittatum (Striped black fly).